The sequence spans 414 residues: uncharacterized protein (414 aa).

It belongs to the MG032/MG096/MG288 family.

This is an uncharacterized protein from Mycoplasma genitalium (strain ATCC 33530 / DSM 19775 / NCTC 10195 / G37) (Mycoplasmoides genitalium).